The chain runs to 193 residues: Cytidylate kinase (193 aa).

12–20 contributes to the ATP binding site; that stretch reads GLAGSGTTT.

This sequence belongs to the cytidylate kinase family. Type 2 subfamily.

The protein resides in the cytoplasm. The catalysed reaction is CMP + ATP = CDP + ADP. It carries out the reaction dCMP + ATP = dCDP + ADP. The chain is Cytidylate kinase from Thermococcus kodakarensis (strain ATCC BAA-918 / JCM 12380 / KOD1) (Pyrococcus kodakaraensis (strain KOD1)).